The primary structure comprises 362 residues: 3-dehydroquinate synthase (362 aa).

NAD(+)-binding positions include 72-77 (SGEQAK), 106-110 (GVVGD), 130-131 (TT), lysine 142, and lysine 151. Positions 184, 246, and 263 each coordinate Zn(2+).

The protein belongs to the sugar phosphate cyclases superfamily. Dehydroquinate synthase family. Requires NAD(+) as cofactor. It depends on Co(2+) as a cofactor. Zn(2+) is required as a cofactor.

It is found in the cytoplasm. The catalysed reaction is 7-phospho-2-dehydro-3-deoxy-D-arabino-heptonate = 3-dehydroquinate + phosphate. It functions in the pathway metabolic intermediate biosynthesis; chorismate biosynthesis; chorismate from D-erythrose 4-phosphate and phosphoenolpyruvate: step 2/7. Functionally, catalyzes the conversion of 3-deoxy-D-arabino-heptulosonate 7-phosphate (DAHP) to dehydroquinate (DHQ). The sequence is that of 3-dehydroquinate synthase from Bacillus subtilis (strain 168).